A 237-amino-acid chain; its full sequence is Large ribosomal subunit protein uL1 (237 aa).

It belongs to the universal ribosomal protein uL1 family. As to quaternary structure, part of the 50S ribosomal subunit.

Functionally, binds directly to 23S rRNA. The L1 stalk is quite mobile in the ribosome, and is involved in E site tRNA release. Protein L1 is also a translational repressor protein, it controls the translation of the L11 operon by binding to its mRNA. This is Large ribosomal subunit protein uL1 from Dehalococcoides mccartyi (strain ATCC BAA-2100 / JCM 16839 / KCTC 5957 / BAV1).